We begin with the raw amino-acid sequence, 105 residues long: Thiosulfate sulfurtransferase GlpE (105 aa).

Residues 16 to 104 (DKEDVVIADI…WEAAYSEKVE (89 aa)) enclose the Rhodanese domain. The active-site Cysteine persulfide intermediate is the Cys-64.

Belongs to the GlpE family.

The protein localises to the cytoplasm. The enzyme catalyses thiosulfate + hydrogen cyanide = thiocyanate + sulfite + 2 H(+). The catalysed reaction is thiosulfate + [thioredoxin]-dithiol = [thioredoxin]-disulfide + hydrogen sulfide + sulfite + 2 H(+). Its function is as follows. Transferase that catalyzes the transfer of sulfur from thiosulfate to thiophilic acceptors such as cyanide or dithiols. May function in a CysM-independent thiosulfate assimilation pathway by catalyzing the conversion of thiosulfate to sulfite, which can then be used for L-cysteine biosynthesis. This Pseudoalteromonas translucida (strain TAC 125) protein is Thiosulfate sulfurtransferase GlpE.